Reading from the N-terminus, the 350-residue chain is Histidinol-phosphate aminotransferase (350 aa).

Lysine 207 is subject to N6-(pyridoxal phosphate)lysine.

This sequence belongs to the class-II pyridoxal-phosphate-dependent aminotransferase family. Histidinol-phosphate aminotransferase subfamily. In terms of assembly, homodimer. It depends on pyridoxal 5'-phosphate as a cofactor.

The enzyme catalyses L-histidinol phosphate + 2-oxoglutarate = 3-(imidazol-4-yl)-2-oxopropyl phosphate + L-glutamate. It functions in the pathway amino-acid biosynthesis; L-histidine biosynthesis; L-histidine from 5-phospho-alpha-D-ribose 1-diphosphate: step 7/9. The chain is Histidinol-phosphate aminotransferase from Streptococcus thermophilus (strain ATCC BAA-491 / LMD-9).